Here is a 200-residue protein sequence, read N- to C-terminus: Recombination protein RecR (200 aa).

A C4-type zinc finger spans residues 58-75 (CPDCFCLKTSKTSSCDFC). The 96-residue stretch at 82–177 (SFLCIVATPK…KISRLALGMP (96 aa)) folds into the Toprim domain.

Belongs to the RecR family.

Its function is as follows. May play a role in DNA repair. It seems to be involved in an RecBC-independent recombinational process of DNA repair. It may act with RecF and RecO. The sequence is that of Recombination protein RecR from Chlamydia muridarum (strain MoPn / Nigg).